The primary structure comprises 155 residues: Isotocin-neurophysin IT 1 (155 aa).

Positions 1–19 (MTGTAISVCLLFLLSVCSA) are cleaved as a signal peptide. An intrachain disulfide couples C20 to C25. G28 bears the Glycine amide mark. 7 cysteine pairs are disulfide-bonded: C41/C85, C44/C58, C52/C75, C59/C65, C92/C105, C99/C117, and C106/C111.

The protein belongs to the vasopressin/oxytocin family. Seven disulfide bonds are present in neurophysin.

Isotocin causes contraction of smooth muscles. The chain is Isotocin-neurophysin IT 1 from Takifugu rubripes (Japanese pufferfish).